We begin with the raw amino-acid sequence, 399 residues long: Nicotinate phosphoribosyltransferase (399 aa).

Position 217 is a phosphohistidine; by autocatalysis (H217).

Belongs to the NAPRTase family. In terms of processing, transiently phosphorylated on a His residue during the reaction cycle. Phosphorylation strongly increases the affinity for substrates and increases the rate of nicotinate D-ribonucleotide production. Dephosphorylation regenerates the low-affinity form of the enzyme, leading to product release.

It catalyses the reaction nicotinate + 5-phospho-alpha-D-ribose 1-diphosphate + ATP + H2O = nicotinate beta-D-ribonucleotide + ADP + phosphate + diphosphate. It participates in cofactor biosynthesis; NAD(+) biosynthesis; nicotinate D-ribonucleotide from nicotinate: step 1/1. Its function is as follows. Catalyzes the synthesis of beta-nicotinate D-ribonucleotide from nicotinate and 5-phospho-D-ribose 1-phosphate at the expense of ATP. The chain is Nicotinate phosphoribosyltransferase from Burkholderia orbicola (strain MC0-3).